Here is a 317-residue protein sequence, read N- to C-terminus: Melanocyte-stimulating hormone receptor (317 aa).

Residues methionine 1–glutamate 37 lie on the Extracellular side of the membrane. The N-linked (GlcNAc...) asparagine glycan is linked to asparagine 29. A helical membrane pass occupies residues valine 38–isoleucine 63. Over alanine 64–proline 72 the chain is Cytoplasmic. Residues methionine 73–leucine 93 traverse the membrane as a helical segment. Topologically, residues glutamate 94–asparagine 118 are extracellular. Residues threonine 119 to leucine 140 form a helical membrane-spanning segment. The Cytoplasmic segment spans residues aspartate 141–arginine 163. Residues alanine 164–cysteine 183 traverse the membrane as a helical segment. Topologically, residues aspartate 184–cysteine 191 are extracellular. Residues leucine 192 to leucine 211 form a helical membrane-spanning segment. Topologically, residues alanine 212–alanine 240 are cytoplasmic. The chain crosses the membrane as a helical span at residues alanine 241 to leucine 266. Topologically, residues cysteine 267–asparagine 279 are extracellular. Residues phenylalanine 280–phenylalanine 300 form a helical membrane-spanning segment. Over arginine 301–tryptophan 317 the chain is Cytoplasmic. Cysteine 315 carries the S-palmitoyl cysteine lipid modification.

This sequence belongs to the G-protein coupled receptor 1 family. Interacts with MGRN1, but does not undergo MGRN1-mediated ubiquitination; this interaction competes with GNAS-binding and thus inhibits agonist-induced cAMP production. Interacts with OPN3; the interaction results in a decrease in MC1R-mediated cAMP signaling and ultimately a decrease in melanin production in melanocytes.

The protein localises to the cell membrane. Functionally, receptor for MSH (alpha, beta and gamma) and ACTH. The activity of this receptor is mediated by G proteins which activate adenylate cyclase. Mediates melanogenesis, the production of eumelanin (black/brown) and phaeomelanin (red/yellow), via regulation of cAMP signaling in melanocytes. The protein is Melanocyte-stimulating hormone receptor (MC1R) of Alouatta seniculus (Red howler monkey).